Reading from the N-terminus, the 377-residue chain is Prostaglandin reductase-3 (377 aa).

N6-acetyllysine is present on K35. NADP(+) is bound by residues T185, S205, K209, Y224, S247, I269, and Y275. Position 299 is a phosphoserine (S299). NADP(+) contacts are provided by residues 303–305 and N361; that span reads FFL.

This sequence belongs to the zinc-containing alcohol dehydrogenase family. Quinone oxidoreductase subfamily.

Its subcellular location is the peroxisome. The enzyme catalyses 13,14-dihydro-15-oxo-prostaglandin E2 + NADP(+) = 15-oxoprostaglandin E2 + NADPH + H(+). It carries out the reaction 13,14-dihydro-15-oxo-prostaglandin E1 + NADP(+) = 15-oxoprostaglandin E1 + NADPH + H(+). It catalyses the reaction 13,14-dihydro-15-oxo-PGF2alpha + NADP(+) = 15-oxoprostaglandin F2alpha + NADPH + H(+). The catalysed reaction is 13,14-dihydro-15-oxo-prostaglandin F1alpha + NADP(+) = 15-oxoprostaglandin F1alpha + NADPH + H(+). Functionally, functions as 15-oxo-prostaglandin 13-reductase and acts on 15-keto-PGE1, 15-keto-PGE2, 15-keto-PGE1-alpha and 15-keto-PGE2-alpha with highest efficiency towards 15-keto-PGE2-alpha. Overexpression represses transcriptional activity of PPARG and inhibits adipocyte differentiation. The sequence is that of Prostaglandin reductase-3 (PTGR3) from Bos taurus (Bovine).